Consider the following 90-residue polypeptide: Antitoxin epsilon 1 (90 aa).

It belongs to the epsilon antitoxin family. In the presence of the zeta toxin, forms an inactive PezA(2)PezT(2) heterotetramer.

Antitoxin component of a type II toxin-antitoxin (TA) system. Neutralizes the toxic effect of zeta toxin. Part of a postsegregational killing (PSK) system involved in the killing of plasmid-free cells. Continuous synthesis of the epsilon antitoxin is required to counteract the zeta toxin. This chain is Antitoxin epsilon 1, found in Enterococcus faecalis (Streptococcus faecalis).